Here is a 451-residue protein sequence, read N- to C-terminus: Trigger factor (451 aa).

The region spanning 165–250 (DDKLTIDFEG…LRQIQAREAL (86 aa)) is the PPIase FKBP-type domain.

This sequence belongs to the FKBP-type PPIase family. Tig subfamily.

The protein resides in the cytoplasm. It catalyses the reaction [protein]-peptidylproline (omega=180) = [protein]-peptidylproline (omega=0). Its function is as follows. Involved in protein export. Acts as a chaperone by maintaining the newly synthesized protein in an open conformation. Functions as a peptidyl-prolyl cis-trans isomerase. The chain is Trigger factor from Helicobacter pylori (strain Shi470).